The primary structure comprises 520 residues: Zinc finger and BTB domain-containing protein 45 (520 aa).

The BTB domain maps to 33-96 (CDVTVRIREA…LYSGSLVVAQ (64 aa)). 2 disordered regions span residues 182 to 272 (PAPP…GGAG) and 337 to 372 (FHLG…PDAA). Residues 206-225 (RGEEDDDEETDEETDAEEGE) show a composition bias toward acidic residues. Over residues 342–363 (PGPPAPTPPTPSGPAPAPPPTF) the composition is skewed to pro residues. 4 C2H2-type zinc fingers span residues 412–434 (YECS…MFIH), 440–462 (HQCA…MVTH), 468–490 (FQCA…MRTH), and 495–517 (APCP…LAAH).

This sequence belongs to the krueppel C2H2-type zinc-finger protein family.

It is found in the nucleus. In terms of biological role, may be involved in transcriptional regulation. In the central nervous system, may play a role in glial cell differentiation. This chain is Zinc finger and BTB domain-containing protein 45, found in Mus musculus (Mouse).